We begin with the raw amino-acid sequence, 83 residues long: MSSGGLLLLLGLLTLWAELTPVSSKDHPEFCELPADSGPCRGILHAFYYHPVHRTCLEFIYGGCYGNANNFKTIDECKRTCAA.

Positions 1–24 (MSSGGLLLLLGLLTLWAELTPVSS) are cleaved as a signal peptide. The BPTI/Kunitz inhibitor domain occupies 31–81 (CELPADSGPCRGILHAFYYHPVHRTCLEFIYGGCYGNANNFKTIDECKRTC). Intrachain disulfides connect C31/C81, C40/C64, and C56/C77.

The protein belongs to the venom Kunitz-type family. As to expression, expressed by the venom gland.

The protein resides in the secreted. Serine protease inhibitor. In Notechis scutatus scutatus (Mainland tiger snake), this protein is Kunitz-type serine protease inhibitor tigerin-1.